The sequence spans 509 residues: Maturase K (509 aa).

The protein belongs to the intron maturase 2 family. MatK subfamily.

It is found in the plastid. Its subcellular location is the chloroplast. Functionally, usually encoded in the trnK tRNA gene intron. Probably assists in splicing its own and other chloroplast group II introns. The sequence is that of Maturase K from Austrocylindropuntia vestita (Cactus).